A 695-amino-acid polypeptide reads, in one-letter code: Follicle-stimulating hormone receptor (695 aa).

The first 17 residues, 1 to 17, serve as a signal peptide directing secretion; it reads MALFLVALLAFLSLGSG. Cystine bridges form between C18–C25 and C23–C32. Residues 18–46 enclose the LRRNT domain; sequence CHHRLCHCSNGVFLCQDSKVTEMPSDLPR. Topologically, residues 18 to 366 are extracellular; it reads CHHRLCHCSN…EDIMGYDILR (349 aa). 9 LRR repeats span residues 48-70, 71-93, 96-118, 121-142, 143-167, 171-192, 194-216, 219-239, and 240-262; these read AVELRFVLTKLRVIPEGAFSGFG, DLEKIEISQNDVLEVIEANVFSN, KLHEIRIEKANNLLYIDPDAFQN, NLRYLLISNTGIKHLPAVHKIQ, SLQKVLLDIQDNINIHTVERNSFMG, ESMIVWLSKNGIQEIHNCAFNG, QLDELNLSDNSNLEELPNDVFQG, GPVILDISRTRIRSLPSYGLE, and NLKKLRAKSTYHLKKLPSLEKFV. N-linked (GlcNAc...) asparagine glycans are attached at residues N191 and N199. Disulfide bonds link C275–C346, C276–C292, C276–C356, and C292–C338. N-linked (GlcNAc...) asparagine glycosylation occurs at N293. Y335 is modified (sulfotyrosine). Residues 367 to 387 form a helical membrane-spanning segment; sequence VLIWFISILAITGNILVLVIL. The Cytoplasmic portion of the chain corresponds to 388 to 398; the sequence is ITSQYKLTVPR. The helical transmembrane segment at 399–421 threads the bilayer; it reads FLMCNLAFADLCIGIYLLLIASV. The Extracellular segment spans residues 422-443; sequence DVHTKSQYHNYAIDWQTGAGCD. A disulfide bridge connects residues C442 and C517. The helical transmembrane segment at 444-465 threads the bilayer; that stretch reads AAGFFTVFASELSVYTLTAITL. At 466-485 the chain is on the cytoplasmic side; the sequence is ERWHTITHAMQLECKVHVRH. The helical transmembrane segment at 486-508 threads the bilayer; sequence AASIMLVGWVFAFAVALFPIFGI. The Extracellular segment spans residues 509–528; sequence SSYMKVSICLPMDIDSPLSQ. The helical transmembrane segment at 529–550 threads the bilayer; sequence LYVMSLLVLNVLAFVVICGCYT. Residues 551–573 lie on the Cytoplasmic side of the membrane; the sequence is HIYLTVRNPNITSSSSDTKIAKR. A helical transmembrane segment spans residues 574–597; sequence MAMLIFTDFLCMAPISFFAISASL. Topologically, residues 598–608 are extracellular; it reads KVPLITVSKSK. A helical transmembrane segment spans residues 609–630; sequence ILLVLFYPINSCANPFLYAIFT. At 631–695 the chain is on the cytoplasmic side; it reads RNFRRDFFIL…LIPLRHLAKN (65 aa).

Belongs to the G-protein coupled receptor 1 family. FSH/LSH/TSH subfamily. As to quaternary structure, homotrimer. Functions as a homotrimer binding the FSH hormone heterodimer composed of CGA and FSHB. Interacts with ARRB2. Interacts with APPL2; interaction is independent of follicle stimulating hormone stimulation. N-glycosylated; indirectly required for FSH-binding, possibly via a conformational change that allows high affinity binding of hormone. In terms of processing, sulfated. In terms of tissue distribution, isoform FSH-R3 is expressed in ovary and testis, but not in kidney (at protein level).

It localises to the cell membrane. In terms of biological role, g protein-coupled receptor for follitropin, the follicle-stimulating hormone. The activity of isoform FSH-R1 is mediated by G proteins which activate adenylate cyclase. Isoform FSH-R2 and isoform FSH-R3 also bind FSH, but this does not result in activation of adenylate cyclase. Isoform FSH-R3 may be involved in calcium signaling. Through cAMP production activates the downstream PI3K-AKT and ERK1/ERK2 signaling pathways. This is Follicle-stimulating hormone receptor (FSHR) from Ovis aries (Sheep).